Consider the following 251-residue polypeptide: Maleate isomerase (251 aa).

Substrate-binding positions include Asn-15, 81-83, Tyr-138, and Asn-168; that span reads CLV. Cys-81 serves as the catalytic Nucleophile. Cys-81 is modified (S-(2-succinyl)cysteine). The Proton donor role is filled by Cys-199. 200 to 201 contributes to the substrate binding site; that stretch reads VQ.

This sequence belongs to the maleate isomerase family. As to quaternary structure, homodimer.

It carries out the reaction maleate = fumarate. Catalyzes cis-trans isomerization of the C2-C3 double bond in maleate to yield fumarate. In Geobacillus stearothermophilus (Bacillus stearothermophilus), this protein is Maleate isomerase.